The primary structure comprises 621 residues: ATP-dependent DNA helicase Q1 (621 aa).

Residues 100–275 (VNATMARKDI…QKILCVEKCL (176 aa)) enclose the Helicase ATP-binding domain. 113-120 (MPTGGGKS) is an ATP binding site. The DEVH box motif lies at 219–222 (DEVH). One can recognise a Helicase C-terminal domain in the interval 296–451 (SAEDFIENIA…EMVSYCQNIS (156 aa)). 4 residues coordinate Zn(2+): cysteine 453, cysteine 471, cysteine 475, and cysteine 478. 2 positions are modified to N6-acetyllysine: lysine 514 and lysine 522. A phosphoserine mark is found at serine 597 and serine 602.

The protein belongs to the helicase family. RecQ subfamily. May form homodimers or higher order oligomers. Interacts with EXO1. Interacts with MLH1. Interacts with PARP1. Requires Mg(2+) as cofactor. The cofactor is Mn(2+). Zn(2+) is required as a cofactor.

The protein localises to the nucleus. The enzyme catalyses Couples ATP hydrolysis with the unwinding of duplex DNA by translocating in the 3'-5' direction.. The catalysed reaction is ATP + H2O = ADP + phosphate + H(+). It catalyses the reaction dATP + H2O = dADP + phosphate + H(+). DNA helicase that plays a role in DNA damage repair and genome stability. Exhibits a magnesium- and ATP-dependent DNA-helicase activity that unwinds single- and double-stranded DNA in a 3'-5' direction. Plays a role in restoring regressed replication forks. Required to restart stalled replication forks induced by abortive topoisomerase 1 and 2 lesions. May play a role in the repair of DNA that is damaged by ultraviolet light or other mutagens. This Rattus norvegicus (Rat) protein is ATP-dependent DNA helicase Q1 (Recql).